We begin with the raw amino-acid sequence, 360 residues long: Peptide chain release factor 1 (360 aa).

An N5-methylglutamine modification is found at glutamine 235. The segment at 285–305 is disordered; sequence KRQEAEASERRNLLGSGDRSD.

This sequence belongs to the prokaryotic/mitochondrial release factor family. Methylated by PrmC. Methylation increases the termination efficiency of RF1.

It is found in the cytoplasm. In terms of biological role, peptide chain release factor 1 directs the termination of translation in response to the peptide chain termination codons UAG and UAA. The polypeptide is Peptide chain release factor 1 (Proteus mirabilis (strain HI4320)).